Consider the following 559-residue polypeptide: Potassium-transporting ATPase potassium-binding subunit (559 aa).

Transmembrane regions (helical) follow at residues 5–25 (GFLLNASFLLILLVLAKPLGS), 27–47 (LARLIAAVPLPGVAGVERILW), 63–83 (LLALLTLNLLGLGILFCLLFW), 132–152 (GLTVQNFLSAATGIAVVFALI), 170–190 (LVRITLWILFPVALIIALFFI), 253–273 (LAQMLAIFLIPAALCFAFGEA), 283–303 (LLWAMSFIFVVCVAVVMWAEV), 327–347 (FGVLASSLFAVVTTAASCGAV), 356–376 (ALGGMVPMWLMQIGEVVFGGV), 379–399 (GLYGMLLFVLLAVFIAGLMIG), 416–436 (MTALAILVTPMLVLLGSALAM), 484–504 (LLAFCMFVGRFGVIIPVMAIA), and 524–544 (GALFIGLLIGTVLLVGALTFI).

Belongs to the KdpA family. As to quaternary structure, the system is composed of three essential subunits: KdpA, KdpB and KdpC.

It is found in the cell inner membrane. Part of the high-affinity ATP-driven potassium transport (or Kdp) system, which catalyzes the hydrolysis of ATP coupled with the electrogenic transport of potassium into the cytoplasm. This subunit binds the periplasmic potassium ions and delivers the ions to the membrane domain of KdpB through an intramembrane tunnel. The sequence is that of Potassium-transporting ATPase potassium-binding subunit from Salmonella newport (strain SL254).